A 166-amino-acid polypeptide reads, in one-letter code: Urease accessory protein UreE (166 aa).

The disordered stretch occupies residues 132-156 (FQPEHGAYGGGHHHSRHGDEDFNYP).

It belongs to the UreE family.

It is found in the cytoplasm. Involved in urease metallocenter assembly. Binds nickel. Probably functions as a nickel donor during metallocenter assembly. The polypeptide is Urease accessory protein UreE (Pseudomonas fluorescens (strain ATCC BAA-477 / NRRL B-23932 / Pf-5)).